A 346-amino-acid chain; its full sequence is NADH-ubiquinone oxidoreductase chain 2 (346 aa).

11 helical membrane passes run 1 to 21, 25 to 45, 60 to 80, 95 to 115, 124 to 144, 149 to 169, 178 to 195, 200 to 219, 242 to 262, 274 to 294, and 326 to 346; these read MNPH…TITI, HWVL…PLIS, FLTQ…NAWA, CLLL…HFWF, LMTA…LLLM, LNPA…GWMG, ILAF…IILV, LALL…FMAL, ATLM…GFMP, EMTP…FFYL, and AILA…HAIV.

This sequence belongs to the complex I subunit 2 family.

It localises to the mitochondrion inner membrane. The catalysed reaction is a ubiquinone + NADH + 5 H(+)(in) = a ubiquinol + NAD(+) + 4 H(+)(out). Core subunit of the mitochondrial membrane respiratory chain NADH dehydrogenase (Complex I) that is believed to belong to the minimal assembly required for catalysis. Complex I functions in the transfer of electrons from NADH to the respiratory chain. The immediate electron acceptor for the enzyme is believed to be ubiquinone. In Mareca falcata (Falcated duck), this protein is NADH-ubiquinone oxidoreductase chain 2 (MT-ND2).